The following is a 195-amino-acid chain: CASP-like protein 1B1 (195 aa).

Over 1-15 (MAKLALAATSGKSCK) the chain is Cytoplasmic. Residues 16 to 36 (ILLGLRLLAFSATLSAAIVMG) form a helical membrane-spanning segment. Residues 37–67 (LNKETETFVVGKVGNTPIKATFTAKFDHTPA) lie on the Extracellular side of the membrane. The helical transmembrane segment at 68–88 (FVFFVVANAMVSFHNLLMIAL) threads the bilayer. At 89–104 (QIFGGKMEFTGFRLLS) the chain is on the cytoplasmic side. The chain crosses the membrane as a helical span at residues 105–125 (VAILDMLNVTLISAAANAAAF). Over 126 to 154 (MAEVGKNGNKHARWDKICDRFATYCDHGA) the chain is Extracellular. A helical transmembrane segment spans residues 155 to 175 (GALIAAFAGVILMLIISAASI). Over 176-195 (SRLAQQNKCCSTTASPSVVP) the chain is Cytoplasmic.

The protein belongs to the Casparian strip membrane proteins (CASP) family. As to quaternary structure, homodimer and heterodimers.

The protein resides in the cell membrane. This chain is CASP-like protein 1B1, found in Arabidopsis lyrata subsp. lyrata (Lyre-leaved rock-cress).